A 150-amino-acid chain; its full sequence is Guanine nucleotide-binding protein subunit gamma 2 (150 aa).

The segment covering 1–11 (MRGEANGEEEQ) has biased composition (acidic residues). The disordered stretch occupies residues 1–59 (MRGEANGEEEQQPPRRNHLRDDAEEEEEVERRAARPVSGQQQQQQRRRPTDVGGGAAMR). A coiled-coil region spans residues 65–97 (GKHRLSAAIARLDQELQSLQDELNELETMEPAS). The region spanning 71–137 (AAIARLDQEL…RWFQRVRSSR (67 aa)) is the G protein gamma domain.

G proteins are composed of 3 units, alpha, beta and gamma. Interacts with the beta subunit RGB1.

Its subcellular location is the cell membrane. In terms of biological role, guanine nucleotide-binding proteins (G proteins) are involved as modulators or transducers in various transmembrane signaling systems. This is Guanine nucleotide-binding protein subunit gamma 2 from Oryza sativa subsp. indica (Rice).